A 211-amino-acid chain; its full sequence is Thiamine-phosphate synthase (211 aa).

4-amino-2-methyl-5-(diphosphooxymethyl)pyrimidine is bound by residues 44 to 48 (QYRNK) and Asn-75. Mg(2+) contacts are provided by Asp-76 and Asp-95. Residue Ser-114 coordinates 4-amino-2-methyl-5-(diphosphooxymethyl)pyrimidine. 140 to 142 (TKS) provides a ligand contact to 2-[(2R,5Z)-2-carboxy-4-methylthiazol-5(2H)-ylidene]ethyl phosphate. Lys-143 serves as a coordination point for 4-amino-2-methyl-5-(diphosphooxymethyl)pyrimidine. Gly-171 is a 2-[(2R,5Z)-2-carboxy-4-methylthiazol-5(2H)-ylidene]ethyl phosphate binding site.

The protein belongs to the thiamine-phosphate synthase family. It depends on Mg(2+) as a cofactor.

The enzyme catalyses 2-[(2R,5Z)-2-carboxy-4-methylthiazol-5(2H)-ylidene]ethyl phosphate + 4-amino-2-methyl-5-(diphosphooxymethyl)pyrimidine + 2 H(+) = thiamine phosphate + CO2 + diphosphate. It catalyses the reaction 2-(2-carboxy-4-methylthiazol-5-yl)ethyl phosphate + 4-amino-2-methyl-5-(diphosphooxymethyl)pyrimidine + 2 H(+) = thiamine phosphate + CO2 + diphosphate. It carries out the reaction 4-methyl-5-(2-phosphooxyethyl)-thiazole + 4-amino-2-methyl-5-(diphosphooxymethyl)pyrimidine + H(+) = thiamine phosphate + diphosphate. Its pathway is cofactor biosynthesis; thiamine diphosphate biosynthesis; thiamine phosphate from 4-amino-2-methyl-5-diphosphomethylpyrimidine and 4-methyl-5-(2-phosphoethyl)-thiazole: step 1/1. In terms of biological role, condenses 4-methyl-5-(beta-hydroxyethyl)thiazole monophosphate (THZ-P) and 2-methyl-4-amino-5-hydroxymethyl pyrimidine pyrophosphate (HMP-PP) to form thiamine monophosphate (TMP). The polypeptide is Thiamine-phosphate synthase (Koribacter versatilis (strain Ellin345)).